The sequence spans 450 residues: Adenylosuccinate lyase (450 aa).

N(6)-(1,2-dicarboxyethyl)-AMP-binding positions include 9 to 10, 75 to 77, and 101 to 102; these read RY, HHD, and TS. Histidine 149 (proton donor/acceptor) is an active-site residue. Residue glutamine 223 participates in N(6)-(1,2-dicarboxyethyl)-AMP binding. Serine 273 (proton donor/acceptor) is an active-site residue. N(6)-(1,2-dicarboxyethyl)-AMP is bound by residues serine 274, 279-281, and 318-322; these read KRN and SVERV.

The protein belongs to the lyase 1 family. Adenylosuccinate lyase subfamily. As to quaternary structure, homotetramer. Residues from neighboring subunits contribute catalytic and substrate-binding residues to each active site.

It catalyses the reaction N(6)-(1,2-dicarboxyethyl)-AMP = fumarate + AMP. It carries out the reaction (2S)-2-[5-amino-1-(5-phospho-beta-D-ribosyl)imidazole-4-carboxamido]succinate = 5-amino-1-(5-phospho-beta-D-ribosyl)imidazole-4-carboxamide + fumarate. Its pathway is purine metabolism; AMP biosynthesis via de novo pathway; AMP from IMP: step 2/2. The protein operates within purine metabolism; IMP biosynthesis via de novo pathway; 5-amino-1-(5-phospho-D-ribosyl)imidazole-4-carboxamide from 5-amino-1-(5-phospho-D-ribosyl)imidazole-4-carboxylate: step 2/2. In terms of biological role, catalyzes two reactions in de novo purine nucleotide biosynthesis. Catalyzes the breakdown of 5-aminoimidazole- (N-succinylocarboxamide) ribotide (SAICAR or 2-[5-amino-1-(5-phospho-beta-D-ribosyl)imidazole-4-carboxamido]succinate) to 5-aminoimidazole-4-carboxamide ribotide (AICAR or 5-amino-1-(5-phospho-beta-D-ribosyl)imidazole-4-carboxamide) and fumarate, and of adenylosuccinate (ADS or N(6)-(1,2-dicarboxyethyl)-AMP) to adenosine monophosphate (AMP) and fumarate. This is Adenylosuccinate lyase (purB) from Pyrococcus horikoshii (strain ATCC 700860 / DSM 12428 / JCM 9974 / NBRC 100139 / OT-3).